Reading from the N-terminus, the 276-residue chain is Ribosomal RNA small subunit methyltransferase A (276 aa).

Positions 28, 30, 55, 77, 103, and 124 each coordinate S-adenosyl-L-methionine.

The protein belongs to the class I-like SAM-binding methyltransferase superfamily. rRNA adenine N(6)-methyltransferase family. RsmA subfamily.

The protein resides in the cytoplasm. The enzyme catalyses adenosine(1518)/adenosine(1519) in 16S rRNA + 4 S-adenosyl-L-methionine = N(6)-dimethyladenosine(1518)/N(6)-dimethyladenosine(1519) in 16S rRNA + 4 S-adenosyl-L-homocysteine + 4 H(+). Functionally, specifically dimethylates two adjacent adenosines (A1518 and A1519) in the loop of a conserved hairpin near the 3'-end of 16S rRNA in the 30S particle. May play a critical role in biogenesis of 30S subunits. The polypeptide is Ribosomal RNA small subunit methyltransferase A (Agrobacterium fabrum (strain C58 / ATCC 33970) (Agrobacterium tumefaciens (strain C58))).